The chain runs to 163 residues: Pheromone-binding protein (163 aa).

Positions methionine 1–glutamine 22 are cleaved as a signal peptide. Cystine bridges form between cysteine 39–cysteine 74, cysteine 70–cysteine 129, and cysteine 117–cysteine 138.

This sequence belongs to the PBP/GOBP family. As to expression, antenna.

Its function is as follows. This major soluble protein in olfactory sensilla of male moths might serve to solubilize the extremely hydrophobic pheromone molecules and to transport pheromone through the aqueous lymph to receptors located on olfactory cilia. This Heliothis virescens (Tobacco budworm moth) protein is Pheromone-binding protein.